We begin with the raw amino-acid sequence, 488 residues long: Protein nucleotidyltransferase YdiU (488 aa).

Residues G91, G93, R94, K114, D126, G127, R177, and R184 each coordinate ATP. D253 (proton acceptor) is an active-site residue. Mg(2+) is bound by residues N254 and D263. D263 contacts ATP.

It belongs to the SELO family. It depends on Mg(2+) as a cofactor. Mn(2+) serves as cofactor.

It catalyses the reaction L-seryl-[protein] + ATP = 3-O-(5'-adenylyl)-L-seryl-[protein] + diphosphate. The enzyme catalyses L-threonyl-[protein] + ATP = 3-O-(5'-adenylyl)-L-threonyl-[protein] + diphosphate. The catalysed reaction is L-tyrosyl-[protein] + ATP = O-(5'-adenylyl)-L-tyrosyl-[protein] + diphosphate. It carries out the reaction L-histidyl-[protein] + UTP = N(tele)-(5'-uridylyl)-L-histidyl-[protein] + diphosphate. It catalyses the reaction L-seryl-[protein] + UTP = O-(5'-uridylyl)-L-seryl-[protein] + diphosphate. The enzyme catalyses L-tyrosyl-[protein] + UTP = O-(5'-uridylyl)-L-tyrosyl-[protein] + diphosphate. Nucleotidyltransferase involved in the post-translational modification of proteins. It can catalyze the addition of adenosine monophosphate (AMP) or uridine monophosphate (UMP) to a protein, resulting in modifications known as AMPylation and UMPylation. The protein is Protein nucleotidyltransferase YdiU of Bacillus cereus (strain ATCC 10987 / NRS 248).